The chain runs to 715 residues: MEIRMSKSSSKPVLVTCGLPYANGKAHIGHLRTYVPADIYARSLKKEGREVTFVCGSDTHGTPIVVNAEELGITPTELVEIYHKHFDETFKQLGIYFDAFGTTDDPENHNRTHDIVSRLIEKGYVYPKIIEIAYCPACNRFLPDRYVEGACPHCGETARGDECDQGCGKHLEPGELQNPVCTICGGPAEYRQQEHFFFKLSEFSNYLMDYLSKDLGGTTNAINYARGWVKQGLTDWCITRNLEWGVKFPGHEDLVVYVWVDAPIGYIAFTEEWAAQAGDSWEKFWKGDGEIVHFIGGDITYHHCIFWPAMLKGADYSVPTAVVASGMVKIEDRKFSKTRGYVVWVGEDYLDHGFHPDLLRYYLASYTSHTKELNFSWRVLQEKINAELVAVLGNFLYRTMLFAFKNYGEVPEGEVEPEIRKEIEKALVEVKAAMEEYEFKKAVDSAMALASFGNTYFQSHEPWKLIKEDRDACGQVVYNCLHLAKALSLIFEPVIPQTMEKAWKGLGHESDIHAALYEETLVPLKAGTKLAKPEILFTKLEDDRIGEMEEIANQRVAAANAKRNGVKGGEKEPSKSEGMGPSEASKASEKTVDVATAEEKVQVETLPVIDYEDFAKLDIRVGKVLLVEPVKKSKKLLRIEVDIGEEKPRQLVAGMASYYTPEELVGKSVIVLANLKPAKLCGVESNGMMLAADDGGAIVAALMPDKEIKSGSRIR.

The short motif at 20–30 is the 'HIGH' region element; sequence PYANGKAHIGH. C151, C154, C163, and C167 together coordinate Zn(2+). The 'KMSKS' region signature appears at 334–338; sequence KFSKT. An ATP-binding site is contributed by K337. Positions 559–593 are disordered; the sequence is ANAKRNGVKGGEKEPSKSEGMGPSEASKASEKTVD. A tRNA-binding domain is found at 613–715; that stretch reads DFAKLDIRVG…KEIKSGSRIR (103 aa).

This sequence belongs to the class-I aminoacyl-tRNA synthetase family. MetG type 1 subfamily. Homodimer. Zn(2+) is required as a cofactor.

It is found in the cytoplasm. It catalyses the reaction tRNA(Met) + L-methionine + ATP = L-methionyl-tRNA(Met) + AMP + diphosphate. In terms of biological role, is required not only for elongation of protein synthesis but also for the initiation of all mRNA translation through initiator tRNA(fMet) aminoacylation. This is Methionine--tRNA ligase from Methanosarcina mazei (strain ATCC BAA-159 / DSM 3647 / Goe1 / Go1 / JCM 11833 / OCM 88) (Methanosarcina frisia).